The following is a 338-amino-acid chain: Putative peptide import ATP-binding protein BruAb2_0796 (338 aa).

The ABC transporter domain maps to 7-263; sequence LDIEGLRTVF…PRHPYTMGLL (257 aa). 43-50 is an ATP binding site; the sequence is GESGSGKS.

It belongs to the ABC transporter superfamily. The complex is composed of two ATP-binding proteins (BruAb2_0796 and BruAb2_0797), two transmembrane proteins (BruAb2_0794) and a solute-binding protein (BruAb2_0792).

Its subcellular location is the cell inner membrane. Probably part of an ABC transporter complex that could be involved in peptide import. Probably responsible for energy coupling to the transport system. In Brucella abortus biovar 1 (strain 9-941), this protein is Putative peptide import ATP-binding protein BruAb2_0796.